The following is a 588-amino-acid chain: Proteasome-associated ATPase (588 aa).

Residues 1–10 are compositionally biased toward basic and acidic residues; that stretch reads MAAHDDDMNR. Residues 1–23 form a disordered region; that stretch reads MAAHDDDMNRGIRPGRGSEDPAG. Residues 47–94 are a coiled coil; that stretch reads RILEERIVELQTNLAGVSAQNERLAGTLREARDQIVALKEEVDRLAQP. ATP is bound at residue 276–281; it reads GCGKTL. Residues 587 to 588 form a docks into pockets in the proteasome alpha-ring region; it reads YL.

It belongs to the AAA ATPase family. In terms of assembly, homohexamer. Assembles into a hexameric ring structure that caps the 20S proteasome core. Strongly interacts with the prokaryotic ubiquitin-like protein Pup through a hydrophobic interface; the interacting region of ARC lies in its N-terminal coiled-coil domain. There is one Pup binding site per ARC hexamer ring. Upon ATP-binding, the C-terminus of ARC interacts with the alpha-rings of the proteasome core, possibly by binding to the intersubunit pockets.

Its pathway is protein degradation; proteasomal Pup-dependent pathway. ATPase which is responsible for recognizing, binding, unfolding and translocation of pupylated proteins into the bacterial 20S proteasome core particle. May be essential for opening the gate of the 20S proteasome via an interaction with its C-terminus, thereby allowing substrate entry and access to the site of proteolysis. Thus, the C-termini of the proteasomal ATPase may function like a 'key in a lock' to induce gate opening and therefore regulate proteolysis. The chain is Proteasome-associated ATPase from Streptomyces coelicolor (strain ATCC BAA-471 / A3(2) / M145).